The following is a 290-amino-acid chain: Glycine--tRNA ligase alpha subunit (290 aa).

The protein belongs to the class-II aminoacyl-tRNA synthetase family. In terms of assembly, tetramer of two alpha and two beta subunits.

It localises to the cytoplasm. It catalyses the reaction tRNA(Gly) + glycine + ATP = glycyl-tRNA(Gly) + AMP + diphosphate. In Desulfotalea psychrophila (strain LSv54 / DSM 12343), this protein is Glycine--tRNA ligase alpha subunit.